A 283-amino-acid polypeptide reads, in one-letter code: NAD kinase (283 aa).

The Proton acceptor role is filled by aspartate 68. NAD(+) contacts are provided by residues 68-69 (DG), 142-143 (ND), arginine 153, aspartate 172, 183-188 (TAYSLS), and glutamine 242.

Belongs to the NAD kinase family. It depends on a divalent metal cation as a cofactor.

The protein localises to the cytoplasm. It carries out the reaction NAD(+) + ATP = ADP + NADP(+) + H(+). Functionally, involved in the regulation of the intracellular balance of NAD and NADP, and is a key enzyme in the biosynthesis of NADP. Catalyzes specifically the phosphorylation on 2'-hydroxyl of the adenosine moiety of NAD to yield NADP. The chain is NAD kinase from Caldanaerobacter subterraneus subsp. tengcongensis (strain DSM 15242 / JCM 11007 / NBRC 100824 / MB4) (Thermoanaerobacter tengcongensis).